The primary structure comprises 387 residues: 1-deoxy-D-xylulose 5-phosphate reductoisomerase (387 aa).

NADPH-binding residues include T10, G11, I13, N38, and N122. K123 lines the 1-deoxy-D-xylulose 5-phosphate pocket. E124 contacts NADPH. A Mn(2+)-binding site is contributed by D148. 4 residues coordinate 1-deoxy-D-xylulose 5-phosphate: S149, E150, S174, and H197. Position 150 (E150) interacts with Mn(2+). G203 provides a ligand contact to NADPH. 1-deoxy-D-xylulose 5-phosphate contacts are provided by S210, N215, K216, and E219. E219 contributes to the Mn(2+) binding site.

It belongs to the DXR family. The cofactor is Mg(2+). Mn(2+) is required as a cofactor.

The catalysed reaction is 2-C-methyl-D-erythritol 4-phosphate + NADP(+) = 1-deoxy-D-xylulose 5-phosphate + NADPH + H(+). Its pathway is isoprenoid biosynthesis; isopentenyl diphosphate biosynthesis via DXP pathway; isopentenyl diphosphate from 1-deoxy-D-xylulose 5-phosphate: step 1/6. Its function is as follows. Catalyzes the NADPH-dependent rearrangement and reduction of 1-deoxy-D-xylulose-5-phosphate (DXP) to 2-C-methyl-D-erythritol 4-phosphate (MEP). The chain is 1-deoxy-D-xylulose 5-phosphate reductoisomerase from Ehrlichia canis (strain Jake).